A 369-amino-acid polypeptide reads, in one-letter code: Phospho-N-acetylmuramoyl-pentapeptide-transferase (369 aa).

10 helical membrane-spanning segments follow: residues 2–22, 55–75, 86–106, 122–142, 158–178, 196–216, 239–259, 266–286, 291–311, and 348–368; these read IALL…TPLF, TVVV…MWMM, ALLL…DDFI, LVLQ…FPNA, IPWL…FVLW, LDGL…LMGI, PLDL…FLWW, IFMG…FAIL, LLLA…IIQV, and ILGG…WVVL.

Belongs to the glycosyltransferase 4 family. MraY subfamily. Requires Mg(2+) as cofactor.

The protein resides in the cell membrane. The catalysed reaction is UDP-N-acetyl-alpha-D-muramoyl-L-alanyl-gamma-D-glutamyl-meso-2,6-diaminopimeloyl-D-alanyl-D-alanine + di-trans,octa-cis-undecaprenyl phosphate = di-trans,octa-cis-undecaprenyl diphospho-N-acetyl-alpha-D-muramoyl-L-alanyl-D-glutamyl-meso-2,6-diaminopimeloyl-D-alanyl-D-alanine + UMP. It functions in the pathway cell wall biogenesis; peptidoglycan biosynthesis. Catalyzes the initial step of the lipid cycle reactions in the biosynthesis of the cell wall peptidoglycan: transfers peptidoglycan precursor phospho-MurNAc-pentapeptide from UDP-MurNAc-pentapeptide onto the lipid carrier undecaprenyl phosphate, yielding undecaprenyl-pyrophosphoryl-MurNAc-pentapeptide, known as lipid I. In Arthrobacter sp. (strain FB24), this protein is Phospho-N-acetylmuramoyl-pentapeptide-transferase.